The sequence spans 38 residues: Mu/omega-theraphotoxin-Mb1a (38 aa).

Cystine bridges form between Cys7-Cys21, Cys14-Cys26, and Cys20-Cys33. At Thr38 the chain carries Threonine amide.

The protein belongs to the neurotoxin 10 (Hwtx-1) family. 28 (Jztx-11) subfamily. As to expression, expressed by the venom gland.

Its subcellular location is the secreted. Paralytic toxin that inhibits insect voltage-gated sodium (Nav) and calcium (Cav) channels in P.americana (American cockroach) dorsal unpaired median (DUM) neurons, and inhibits the B.germanica (German cockroach) Nav channel (BgNaV1). Also shows a delay in fast inactivation when tested on BgNaV1. May act as a gating-modifier toxin on Nav and as a pore blocker on Cav. In vivo, reversibly paralyzes both L.cuprina (Australian sheep blowfly) and M.domestica (housefly), but does not affect larvae of H.armigera (cotton bollworms). The protein is Mu/omega-theraphotoxin-Mb1a of Monocentropus balfouri (Socotra Island blue baboon tarantula).